Reading from the N-terminus, the 162-residue chain is Cytochrome c-type biogenesis protein CcmE (162 aa).

Residues Met-1 to Arg-8 are Cytoplasmic-facing. Residues Leu-9 to Ala-29 form a helical; Signal-anchor for type II membrane protein membrane-spanning segment. The Periplasmic segment spans residues Leu-30 to Lys-162. Heme-binding residues include His-131 and Tyr-135. The disordered stretch occupies residues Glu-142–Lys-162. Residues Tyr-153 to Lys-162 are compositionally biased toward polar residues.

It belongs to the CcmE/CycJ family.

The protein localises to the cell inner membrane. Heme chaperone required for the biogenesis of c-type cytochromes. Transiently binds heme delivered by CcmC and transfers the heme to apo-cytochromes in a process facilitated by CcmF and CcmH. This is Cytochrome c-type biogenesis protein CcmE from Shewanella baltica (strain OS223).